We begin with the raw amino-acid sequence, 654 residues long: Peptide-N(4)-(N-acetyl-beta-glucosaminyl)asparagine amidase (654 aa).

The residue at position 2 (Ala2) is an N-acetylalanine. The PUB domain maps to 30 to 91 (EASKLLLTYA…EGETHLIFPK (62 aa)). The segment at 112-163 (RLDGSNKSHKVKSSQQPAASTQLPTTPSSNPSGLNQHTRNRQGQSSDPPSAS) is disordered. Residues 124–163 (SSQQPAASTQLPTTPSSNPSGLNQHTRNRQGQSSDPPSAS) are compositionally biased toward polar residues. A Phosphothreonine modification is found at Thr137. Zn(2+) is bound by residues Cys250, Cys253, Cys283, and Cys286. Cys309 acts as the Nucleophile in catalysis. Residues His336 and Asp353 contribute to the active site. In terms of domain architecture, PAW spans 454–654 (ELGGRISGSV…LEIIIKFSDL (201 aa)).

This sequence belongs to the transglutaminase-like superfamily. PNGase family. In terms of assembly, component of a complex required to couple retrotranslocation, ubiquitination and deglycosylation composed of NGLY1, SAKS1, AMFR, VCP and RAD23B. Interacts with the proteasome components RAD23B and PSMC1. Interacts with directly with VCP. Interacts with DERL1, bringing it close to the endoplasmic reticulum membrane. Interacts with SAKS1. Zn(2+) serves as cofactor.

Its subcellular location is the cytoplasm. It carries out the reaction Hydrolysis of an N(4)-(acetyl-beta-D-glucosaminyl)asparagine residue in which the glucosamine residue may be further glycosylated, to yield a (substituted) N-acetyl-beta-D-glucosaminylamine and a peptide containing an aspartate residue.. With respect to regulation, inhibited by Z-VAD-fmk, a well-known caspase inhibitor, which inhibits enzyme activity through covalent binding of the carbohydrate to the single Cys-306 residue. Specifically deglycosylates the denatured form of N-linked glycoproteins in the cytoplasm and assists their proteasome-mediated degradation. Cleaves the beta-aspartyl-glucosamine (GlcNAc) of the glycan and the amide side chain of Asn, converting Asn to Asp. Prefers proteins containing high-mannose over those bearing complex type oligosaccharides. Can recognize misfolded proteins in the endoplasmic reticulum that are exported to the cytosol to be destroyed and deglycosylate them, while it has no activity toward native proteins. Deglycosylation is a prerequisite for subsequent proteasome-mediated degradation of some, but not all, misfolded glycoproteins. This Homo sapiens (Human) protein is Peptide-N(4)-(N-acetyl-beta-glucosaminyl)asparagine amidase (NGLY1).